We begin with the raw amino-acid sequence, 307 residues long: Ninja-family protein 5 (307 aa).

Disordered regions lie at residues 1 to 159 and 173 to 208; these read MASR…EHTV and TAGSPTPSRPQQGPADRRAAEATGPDGAACHDEPQP. Positions 8–30 are enriched in gly residues; it reads GGFGRDGGQAPVGGAGAAPGPGG. Composition is skewed to polar residues over residues 63-83 and 173-183; these read QRSSSVASICSLPAATTGTSC and TAGSPTPSRPQ.

Belongs to the Ninja family.

Its subcellular location is the nucleus. In Zea mays (Maize), this protein is Ninja-family protein 5.